The chain runs to 203 residues: Serine hydrolase-like protein (203 aa).

The 113-residue stretch at 33–145 (PPVLCLHGWL…FLLESDEMEN (113 aa)) folds into the AB hydrolase-1 domain. The active site involves serine 108.

It belongs to the AB hydrolase superfamily.

Its function is as follows. Putative serine hydrolase. This is Serine hydrolase-like protein (SERHL) from Homo sapiens (Human).